We begin with the raw amino-acid sequence, 86 residues long: Large ribosomal subunit protein bL28 (86 aa).

This sequence belongs to the bacterial ribosomal protein bL28 family.

This is Large ribosomal subunit protein bL28 from Bacteroides thetaiotaomicron (strain ATCC 29148 / DSM 2079 / JCM 5827 / CCUG 10774 / NCTC 10582 / VPI-5482 / E50).